The primary structure comprises 519 residues: Anthranilate synthase component 1 (519 aa).

Residues Thr40 and 293–295 each bind L-tryptophan; that span reads PYM. Chorismate is bound at residue 330-331; sequence GT. A Mg(2+)-binding site is contributed by Glu363. Chorismate is bound by residues Tyr451, Arg471, 485–487, and Gly487; that span reads GSG. Glu500 lines the Mg(2+) pocket.

This sequence belongs to the anthranilate synthase component I family. In terms of assembly, heterotetramer consisting of two non-identical subunits: a beta subunit (TrpG) and a large alpha subunit (TrpE). The cofactor is Mg(2+).

The catalysed reaction is chorismate + L-glutamine = anthranilate + pyruvate + L-glutamate + H(+). It participates in amino-acid biosynthesis; L-tryptophan biosynthesis; L-tryptophan from chorismate: step 1/5. With respect to regulation, feedback inhibited by tryptophan. In terms of biological role, part of a heterotetrameric complex that catalyzes the two-step biosynthesis of anthranilate, an intermediate in the biosynthesis of L-tryptophan. In the first step, the glutamine-binding beta subunit (TrpG) of anthranilate synthase (AS) provides the glutamine amidotransferase activity which generates ammonia as a substrate that, along with chorismate, is used in the second step, catalyzed by the large alpha subunit of AS (TrpE) to produce anthranilate. In the absence of TrpG, TrpE can synthesize anthranilate directly from chorismate and high concentrations of ammonia. The protein is Anthranilate synthase component 1 (trpE) of Buchnera aphidicola subsp. Diuraphis noxia.